The primary structure comprises 421 residues: Putative B3 domain-containing protein Os08g0333500 (421 aa).

Positions 1–51 (MTVELEKIAGSFFISKGWKTFVHRTGLLSGQYIRFQVLTPSKINVLLFDKK) form a DNA-binding region, TF-B3. The tract at residues 92–121 (SHTSNKETSSDSRTESMTDIPSSSDNSGET) is disordered. The span at 95–107 (SNKETSSDSRTES) shows a compositional bias: basic and acidic residues. A compositionally biased stretch (polar residues) spans 108–121 (MTDIPSSSDNSGET).

It localises to the nucleus. In Oryza sativa subsp. japonica (Rice), this protein is Putative B3 domain-containing protein Os08g0333500.